The chain runs to 57 residues: uncharacterized protein (57 aa).

Residues 34-54 (AALLDAAALVVIPGLLTAAAV) form a helical membrane-spanning segment.

The protein localises to the membrane. This is an uncharacterized protein from Dictyostelium discoideum (Social amoeba).